The chain runs to 476 residues: Protein transport protein SEC61 subunit alpha (476 aa).

Residues methionine 1 to leucine 33 are Cytoplasmic-facing. A helical transmembrane segment spans residues methionine 34–isoleucine 54. The Lumenal portion of the chain corresponds to valine 55–threonine 76. The helical transmembrane segment at leucine 77–glycine 97 threads the bilayer. Topologically, residues threonine 98–lysine 119 are cytoplasmic. Residues leucine 120–glycine 140 traverse the membrane as a helical segment. Residues proline 141–glycine 146 lie on the Lumenal side of the membrane. The chain crosses the membrane as a helical span at residues alanine 147–leucine 167. The Cytoplasmic segment spans residues aspartate 168–asparagine 246. The chain crosses the membrane as a helical span at residues leucine 247 to isoleucine 267. Residues proline 268–threonine 361 are Lumenal-facing. The helical transmembrane segment at alanine 362 to valine 382 threads the bilayer. At serine 383–arginine 415 the chain is on the cytoplasmic side. A helical membrane pass occupies residues isoleucine 416–alanine 434. Topologically, residues serine 435–alanine 440 are lumenal. The helical transmembrane segment at leucine 441 to phenylalanine 458 threads the bilayer. Residues glutamate 459–glycine 476 lie on the Cytoplasmic side of the membrane.

This sequence belongs to the SecY/SEC61-alpha family. In terms of assembly, heterotrimeric complex composed of SEC61-alpha, SEC61-beta and SEC61-gamma.

The protein localises to the endoplasmic reticulum membrane. Functionally, appears to play a crucial role in the insertion of secretory and membrane polypeptides into the ER. It is required for assembly of membrane and secretory proteins and is essential for cell growth. It interacts with other membrane proteins required for protein translocation. Upon binding to SEC62/63 complex, secretory precursor polypeptides may engage SEC61 to begin membrane penetration event. A cycle of assembly and disassembly of SEC62/63 from SEC61 may govern the activity of the translocase. The protein is Protein transport protein SEC61 subunit alpha (sec-61) of Neurospora crassa (strain ATCC 24698 / 74-OR23-1A / CBS 708.71 / DSM 1257 / FGSC 987).